Reading from the N-terminus, the 247-residue chain is TM2 domain-containing protein 3 (247 aa).

A signal peptide spans 1 to 29 (MAGGVLPLRGLRALCRVLLFLSQFCILSG). Residues 30–179 (GEQSQALAQS…RTFPKMLYCN (150 aa)) are Extracellular-facing. 6 N-linked (GlcNAc...) asparagine glycosylation sites follow: asparagine 87, asparagine 122, asparagine 140, asparagine 157, asparagine 169, and asparagine 179. Residues 180-200 (WTGGYKWSTALALSITLGGFG) traverse the membrane as a helical segment. The TM2 domain maps to 183 to 230 (GYKWSTALALSITLGGFGADRFYLGQWREGLGKLFSFGGLGIWTLIDV). The Cytoplasmic segment spans residues 201-215 (ADRFYLGQWREGLGK). Residues 216-236 (LFSFGGLGIWTLIDVLLIGVG) traverse the membrane as a helical segment. The Extracellular segment spans residues 237 to 247 (YVGPADGSLYI).

Belongs to the TM2 family. In terms of tissue distribution, widely expressed.

Its subcellular location is the membrane. In terms of biological role, probable positive regulator of Notch signaling. The sequence is that of TM2 domain-containing protein 3 (TM2D3) from Homo sapiens (Human).